Here is a 176-residue protein sequence, read N- to C-terminus: ATP-dependent protease subunit HslV (176 aa).

Thr-5 is an active-site residue. The Na(+) site is built by Ala-161, Cys-164, and Thr-167.

Belongs to the peptidase T1B family. HslV subfamily. In terms of assembly, a double ring-shaped homohexamer of HslV is capped on each side by a ring-shaped HslU homohexamer. The assembly of the HslU/HslV complex is dependent on binding of ATP.

Its subcellular location is the cytoplasm. The enzyme catalyses ATP-dependent cleavage of peptide bonds with broad specificity.. With respect to regulation, allosterically activated by HslU binding. Functionally, protease subunit of a proteasome-like degradation complex believed to be a general protein degrading machinery. The chain is ATP-dependent protease subunit HslV from Pelotomaculum thermopropionicum (strain DSM 13744 / JCM 10971 / SI).